The primary structure comprises 336 residues: Glyceraldehyde-3-phosphate dehydrogenase (336 aa).

NAD(+) contacts are provided by residues 12–13 (RI), D34, R78, and T121. D-glyceraldehyde 3-phosphate contacts are provided by residues 151–153 (SCT), T182, R199, 212–213 (TG), and R235. Catalysis depends on C152, which acts as the Nucleophile. N316 is an NAD(+) binding site.

Belongs to the glyceraldehyde-3-phosphate dehydrogenase family. In terms of assembly, homotetramer.

It localises to the cytoplasm. The catalysed reaction is D-glyceraldehyde 3-phosphate + phosphate + NAD(+) = (2R)-3-phospho-glyceroyl phosphate + NADH + H(+). It functions in the pathway carbohydrate degradation; glycolysis; pyruvate from D-glyceraldehyde 3-phosphate: step 1/5. Also binds human plasminogen. Functionally, catalyzes the oxidative phosphorylation of glyceraldehyde 3-phosphate (G3P) to 1,3-bisphosphoglycerate (BPG) using the cofactor NAD. The first reaction step involves the formation of a hemiacetal intermediate between G3P and a cysteine residue, and this hemiacetal intermediate is then oxidized to a thioester, with concomitant reduction of NAD to NADH. The reduced NADH is then exchanged with the second NAD, and the thioester is attacked by a nucleophilic inorganic phosphate to produce BPG. This is Glyceraldehyde-3-phosphate dehydrogenase (gap) from Streptococcus pyogenes.